The sequence spans 349 residues: Glycerol-3-phosphate dehydrogenase [NAD(P)+] (349 aa).

The NADPH site is built by Trp16, Arg36, and Lys110. Sn-glycerol 3-phosphate-binding residues include Lys110, Gly138, and Thr140. Position 142 (Ala142) interacts with NADPH. The sn-glycerol 3-phosphate site is built by Lys193, Asp246, Ser256, Arg257, and Asn258. The Proton acceptor role is filled by Lys193. Arg257 provides a ligand contact to NADPH. Residues Val281 and Glu283 each contribute to the NADPH site.

This sequence belongs to the NAD-dependent glycerol-3-phosphate dehydrogenase family.

The protein resides in the cytoplasm. The enzyme catalyses sn-glycerol 3-phosphate + NAD(+) = dihydroxyacetone phosphate + NADH + H(+). It catalyses the reaction sn-glycerol 3-phosphate + NADP(+) = dihydroxyacetone phosphate + NADPH + H(+). It participates in membrane lipid metabolism; glycerophospholipid metabolism. In terms of biological role, catalyzes the reduction of the glycolytic intermediate dihydroxyacetone phosphate (DHAP) to sn-glycerol 3-phosphate (G3P), the key precursor for phospholipid synthesis. This Rhodospirillum rubrum (strain ATCC 11170 / ATH 1.1.1 / DSM 467 / LMG 4362 / NCIMB 8255 / S1) protein is Glycerol-3-phosphate dehydrogenase [NAD(P)+].